A 265-amino-acid chain; its full sequence is Cyclin-B2-5 (265 aa).

This sequence belongs to the cyclin family. Cyclin AB subfamily.

This Arabidopsis thaliana (Mouse-ear cress) protein is Cyclin-B2-5 (CYCB2-5).